The sequence spans 132 residues: Small ribosomal subunit protein uS19 (132 aa).

Belongs to the universal ribosomal protein uS19 family.

Protein S19 forms a complex with S13 that binds strongly to the 16S ribosomal RNA. In Korarchaeum cryptofilum (strain OPF8), this protein is Small ribosomal subunit protein uS19.